Reading from the N-terminus, the 79-residue chain is uncharacterized protein (79 aa).

A signal peptide spans 1 to 19; it reads MKYVALAFVLSLVILQISA. Residues 52 to 71 are disordered; that stretch reads RGRKSRTQSGRNQGKSTSDS. Polar residues predominate over residues 58–71; the sequence is TQSGRNQGKSTSDS.

As to expression, nacreous layer of shell (at protein level). Expressed primarily in the mantle with highest level in the mantle pallium and lower level in the mantle edge.

Its subcellular location is the secreted. This is an uncharacterized protein from Margaritifera margaritifera (Freshwater pearl mussel).